The chain runs to 334 residues: Aromatic O-demethylase, reductase subunit (334 aa).

In terms of domain architecture, 2Fe-2S ferredoxin-type spans 1–91 (MTFAVSVGGR…DTEVRSTADA (91 aa)). Residues C35, C40, C43, and C75 each coordinate [2Fe-2S] cluster. Residues 98-198 (LRDLTATVLE…TGPLGDFHLP (101 aa)) form the FAD-binding FR-type domain. FAD contacts are provided by residues 145–148 (RQYS), 162–164 (HVR), 170–172 (VAT), T215, F330, and S334.

In terms of assembly, monomer. Forms a heterodimer with GcoA. It depends on FAD as a cofactor. [2Fe-2S] cluster is required as a cofactor.

The enzyme catalyses 2 oxidized [cytochrome P450] + NADH = 2 reduced [cytochrome P450] + NAD(+) + H(+). The protein operates within aromatic compound metabolism. In terms of biological role, part of a two-component P450 system that efficiently O-demethylates diverse aromatic substrates such as guaiacol and a wide variety of lignin-derived monomers. Is likely involved in lignin degradation, allowing Amycolatopsis sp. ATCC 39116 to catabolize plant biomass. GcoB transfers electrons from NADH to the cytochrome P450 subunit GcoA. Highly prefers NADH over NADPH as the electron donor. This is Aromatic O-demethylase, reductase subunit from Amycolatopsis sp. (strain ATCC 39116 / 75iv2).